The following is a 274-amino-acid chain: uncharacterized protein (274 aa).

A compositionally biased stretch (basic and acidic residues) spans 1-20; sequence MSLEKSLDEIINERTNGFDH. 3 disordered regions span residues 1-63, 148-217, and 230-274; these read MSLE…HDLD, NLKG…EDLD, and ASTV…MEAV. A compositionally biased stretch (basic residues) spans 21–44; that stretch reads KHSRRRGSQNRISKKSRLTYKFKR. Basic and acidic residues predominate over residues 45–63; it reads ASKEHNSSPDDGPWQHDLD. In terms of domain architecture, RRM spans 85–161; that stretch reads FGVRVENLHY…SEIQISKKSP (77 aa). Positions 148 to 160 are enriched in polar residues; it reads NLKGSEIQISKKS. 2 stretches are compositionally biased toward low complexity: residues 181–190 and 200–211; these read SSRSNRGFNR and RSSSKKSSNNSI. Over residues 230–245 the composition is skewed to polar residues; the sequence is ASTVSSHSSQDFTPSI. The span at 263-274 shows a compositional bias: acidic residues; sequence LTEEMDLQMEAV.

This is an uncharacterized protein from Schizosaccharomyces pombe (strain 972 / ATCC 24843) (Fission yeast).